The chain runs to 500 residues: Apolipoprotein N-acyltransferase (500 aa).

6 consecutive transmembrane segments (helical) span residues 5-25, 38-58, 74-94, 111-131, 145-165, and 185-205; these read VAPF…WIFV, LLLL…FWIT, LAIT…FGAI, ILIG…GPLW, AILH…IVSV, and LAIA…LYTA. A CN hydrolase domain is found at 215–462; sequence LKVGIVQGNI…ETIYRRQTQN (248 aa). Glutamate 261 functions as the Proton acceptor in the catalytic mechanism. Lysine 318 is a catalytic residue. Residue cysteine 369 is the Nucleophile of the active site. The chain crosses the membrane as a helical span at residues 469-489; that stretch reads DWFTPLLVGLSFLGWSLNIFW.

It belongs to the CN hydrolase family. Apolipoprotein N-acyltransferase subfamily.

It localises to the cell inner membrane. The catalysed reaction is N-terminal S-1,2-diacyl-sn-glyceryl-L-cysteinyl-[lipoprotein] + a glycerophospholipid = N-acyl-S-1,2-diacyl-sn-glyceryl-L-cysteinyl-[lipoprotein] + a 2-acyl-sn-glycero-3-phospholipid + H(+). It participates in protein modification; lipoprotein biosynthesis (N-acyl transfer). Its function is as follows. Catalyzes the phospholipid dependent N-acylation of the N-terminal cysteine of apolipoprotein, the last step in lipoprotein maturation. The protein is Apolipoprotein N-acyltransferase of Nostoc sp. (strain PCC 7120 / SAG 25.82 / UTEX 2576).